The primary structure comprises 298 residues: Trimeric intracellular cation channel type A (298 aa).

Residues 1–18 lie on the Lumenal side of the membrane; sequence MDLMSALSLGELALSFSR. A helical membrane pass occupies residues 19–39; it reads VPLFPVFDLSYFIVSIIYLKY. Topologically, residues 40–51 are cytoplasmic; sequence EPGAVELSRRHP. Residues 52–72 traverse the membrane as a helical segment; sequence VASWLCAMLHCFGSYILADLL. Residues 73–85 lie on the Lumenal side of the membrane; the sequence is LGEPIIDYFSNSS. Glycine 74 provides a ligand contact to Ca(2+). The helical transmembrane segment at 86-106 threads the bilayer; the sequence is SILLASGVWYLIFFCPLDLFY. Topologically, residues 107–144 are cytoplasmic; the sequence is KCVCFLPVKLIFVAMKEVVRVRKIAVGIHHAHHHYHHG. A 1,2-diacyl-sn-glycero-3-phospho-(1D-myo-inositol-4,5-bisphosphate) contacts are provided by lysine 122 and arginine 126. A helical membrane pass occupies residues 145 to 165; the sequence is WFIMIATGWVKGSGVALLSNV. Topologically, residues 166-178 are lumenal; the sequence is EQLLRGVWKPETN. Residues 179 to 199 form a helical membrane-spanning segment; the sequence is EILHMSFPTKASLYGAILFTL. Topologically, residues 200–209 are cytoplasmic; it reads QQTRWLPVSK. Residues 210–230 traverse the membrane as a helical segment; the sequence is ASLIFVFTMFMVSCKVFLTAT. Residues 231-234 are Lumenal-facing; it reads HSHS. The chain crosses the membrane as a helical span at residues 235–255; sequence SPFDILEGYICPVLFGATWGG. Over 256 to 298 the chain is Cytoplasmic; the sequence is DHHHDNHGAPHGMGLGTQHSGLPAKAKEELGEGSRKKKTKKAD. The interval 260–298 is disordered; the sequence is DNHGAPHGMGLGTQHSGLPAKAKEELGEGSRKKKTKKAD. Basic and acidic residues predominate over residues 280 to 289; sequence KAKEELGEGS.

The protein belongs to the TMEM38 family. Homotrimer; conformation seems to be controled by binding to diacylglycerol (DAG). As to expression, expressed at high levels in heart and striated muscle. Also detected in brain, lung and kidney.

The protein localises to the sarcoplasmic reticulum membrane. The protein resides in the nucleus membrane. It catalyses the reaction K(+)(in) = K(+)(out). Channel activity is activated by a change of voltage within the sarcoplasmic reticulum lumen and blocked by luminal high Ca(2+) levels. In terms of biological role, intracellular monovalent cation channel required for maintenance of rapid intracellular calcium release. Acts as a potassium counter-ion channel that functions in synchronization with calcium release from intracellular stores. Opened by a change of voltage within the sarcoplasmic reticulum lumen. This Mus musculus (Mouse) protein is Trimeric intracellular cation channel type A (Tmem38a).